Consider the following 337-residue polypeptide: Holliday junction branch migration complex subunit RuvB (337 aa).

The tract at residues Met1–Tyr179 is large ATPase domain (RuvB-L). Residues Leu18, Arg19, Gly60, Lys63, Thr64, Ser65, Glu126 to Phe128, Arg169, Tyr179, and Arg216 contribute to the ATP site. Thr64 is a binding site for Mg(2+). A small ATPAse domain (RuvB-S) region spans residues Ser180–Leu250. Positions Asp253–Gln337 are head domain (RuvB-H). Residues Lys308 and Arg313 each contribute to the DNA site.

It belongs to the RuvB family. In terms of assembly, homohexamer. Forms an RuvA(8)-RuvB(12)-Holliday junction (HJ) complex. HJ DNA is sandwiched between 2 RuvA tetramers; dsDNA enters through RuvA and exits via RuvB. An RuvB hexamer assembles on each DNA strand where it exits the tetramer. Each RuvB hexamer is contacted by two RuvA subunits (via domain III) on 2 adjacent RuvB subunits; this complex drives branch migration. In the full resolvosome a probable DNA-RuvA(4)-RuvB(12)-RuvC(2) complex forms which resolves the HJ.

Its subcellular location is the cytoplasm. The enzyme catalyses ATP + H2O = ADP + phosphate + H(+). Functionally, the RuvA-RuvB-RuvC complex processes Holliday junction (HJ) DNA during genetic recombination and DNA repair, while the RuvA-RuvB complex plays an important role in the rescue of blocked DNA replication forks via replication fork reversal (RFR). RuvA specifically binds to HJ cruciform DNA, conferring on it an open structure. The RuvB hexamer acts as an ATP-dependent pump, pulling dsDNA into and through the RuvAB complex. RuvB forms 2 homohexamers on either side of HJ DNA bound by 1 or 2 RuvA tetramers; 4 subunits per hexamer contact DNA at a time. Coordinated motions by a converter formed by DNA-disengaged RuvB subunits stimulates ATP hydrolysis and nucleotide exchange. Immobilization of the converter enables RuvB to convert the ATP-contained energy into a lever motion, pulling 2 nucleotides of DNA out of the RuvA tetramer per ATP hydrolyzed, thus driving DNA branch migration. The RuvB motors rotate together with the DNA substrate, which together with the progressing nucleotide cycle form the mechanistic basis for DNA recombination by continuous HJ branch migration. Branch migration allows RuvC to scan DNA until it finds its consensus sequence, where it cleaves and resolves cruciform DNA. This chain is Holliday junction branch migration complex subunit RuvB, found in Chlamydia pneumoniae (Chlamydophila pneumoniae).